A 397-amino-acid polypeptide reads, in one-letter code: Acetyl-CoA acetyltransferase (397 aa).

Cys95 acts as the Acyl-thioester intermediate in catalysis. Tyr187 and Lys230 together coordinate CoA. Tyr187 is a binding site for K(+). Positions 246, 247, and 249 each coordinate K(+). Ser250 lines the CoA pocket. Val347 provides a ligand contact to K(+). Catalysis depends on proton acceptor residues His351 and Cys379.

This sequence belongs to the thiolase-like superfamily. Thiolase family.

It is found in the peroxisome. It catalyses the reaction 2 acetyl-CoA = acetoacetyl-CoA + CoA. Its function is as follows. Essential for n-decane utilization. The chain is Acetyl-CoA acetyltransferase (PAT1) from Yarrowia lipolytica (strain CLIB 122 / E 150) (Yeast).